Consider the following 1852-residue polypeptide: Dihydropyridine-sensitive L-type skeletal muscle calcium channel subunit alpha-1 (1852 aa).

Topologically, residues 1-70 (MESGSGGGGG…KTCINIVEWK (70 aa)) are cytoplasmic. The stretch at 57–354 (NPFRKTCINI…LVLGALSGEF (298 aa)) is one I repeat. Residues 71-86 (PFEIIILLTIFANCVA) form a helical membrane-spanning segment. Topologically, residues 87 to 107 (LAVFLPMPEEDTNNTNLTLES) are extracellular. N99 and N102 each carry an N-linked (GlcNAc...) asparagine glycan. A helical membrane pass occupies residues 108–127 (LEYIFLVIFTLECFLKIVAY). At 128–139 (GLLFHEGAYLRN) the chain is on the cytoplasmic side. A helical membrane pass occupies residues 140-155 (CWNILDFVIVFMGLFT). The Extracellular segment spans residues 156-176 (LVVDTINTIAGVPTEKGGGFD). A helical transmembrane segment spans residues 177 to 195 (MKALRAFRVLRPLRLVSGV). The Cytoplasmic segment spans residues 196–214 (PSLQVVMSSILKSMLPLFH). A helical transmembrane segment spans residues 215–234 (IALLVFFMVHIYAIMGLELF). Residues 235–326 (KCKMHKTCYY…WINDAMGNDW (92 aa)) lie on the Extracellular side of the membrane. N274 carries an N-linked (GlcNAc...) asparagine glycan. A helical transmembrane segment spans residues 327-351 (PWIYFLTLILVGSFFILNLVLGALS). At 352-447 (GEFTKEREES…RKCHVWVKSK (96 aa)) the chain is on the cytoplasmic side. The segment at 374-391 (QQMDEDLEGYMEWITHAE) is binding to the beta subunit. One copy of the II repeat lies at 433–679 (NVVLRRKCHV…VFLAIAVDNL (247 aa)). Residues 448–466 (FFNWWVLLVVLLNTLVIAM) traverse the membrane as a helical segment. The Extracellular portion of the chain corresponds to 467 to 481 (EHHNQTEGLTSFQDT). Residue N470 is glycosylated (N-linked (GlcNAc...) asparagine). A helical membrane pass occupies residues 482-501 (ANVILLACFTIEMVMKMYAF). The Cytoplasmic segment spans residues 502-509 (GPRAYFMS). A helical transmembrane segment spans residues 510-528 (IFNRFDCFVVTIGILEIIL). The Extracellular segment spans residues 529–538 (VVSNIMTPLG). A helical transmembrane segment spans residues 539-557 (ISVMRCIRLLRLFKLTRYW). The Cytoplasmic portion of the chain corresponds to 558-576 (TSLNNLVASLLNSVKSIAS). Residues 577 to 596 (LLLLLFLFIVIFALLGMQVF) traverse the membrane as a helical segment. At 597-651 (GGKFNFPDRVIQRSNFDNFPQALISVFQVLTGEEWDSIMYNGIMAHGGPQSPGIL) the chain is on the extracellular side. A helical transmembrane segment spans residues 652-675 (VSIYFIILYVCGNFVLLNVFLAIA). Residues 676 to 815 (VDNLAEAESL…KLCHRIVNHT (140 aa)) are Cytoplasmic-facing. The stretch at 802–1084 (HKFRKLCHRI…IFVGFVIVTF (283 aa)) is one III repeat. The chain crosses the membrane as a helical span at residues 816–834 (TFTNIILLFILLSSISLAA). Residues 835-850 (EDPIDPRSFRNKVLAY) are Extracellular-facing. A helical transmembrane segment spans residues 851 to 870 (ADIVFTTVFTIEIVLKMTVY). At 871–882 (GAFLHTGSFCRN) the chain is on the cytoplasmic side. The chain crosses the membrane as a helical span at residues 883-901 (SFNILDLIVVGVSLLSMGM). Residues 902 to 908 (ESSTISV) lie on the Extracellular side of the membrane. The chain crosses the membrane as a helical span at residues 909 to 927 (VKILRVLRVLRPLRAINRA). At 928–946 (KGLKHVVQCMFVAIKTIGN) the chain is on the cytoplasmic side. The chain crosses the membrane as a helical span at residues 947-966 (IVLVTMLLDFMFACIGVQLF). The Extracellular segment spans residues 967-1056 (KGKLYYCTDP…TGPLYNNRVG (90 aa)). The tract at residues 1004–1093 (RMWVNSDFNF…FQKQGEQEYK (90 aa)) is dihydropyridine binding. The helical transmembrane segment at 1057–1081 (ISIFFIIYIIIIAFFMMNIFVGFVI) threads the bilayer. Over 1082-1134 (VTFQKQGEQEYKDCELDKNQRQCVQYALKARPLKCYIPKNPHQYRVWYFVTSC) the chain is Cytoplasmic. An IV repeat occupies 1121–1405 (NPHQYRVWYF…LFVAIIMDNV (285 aa)). Residues 1135–1153 (YFEYLMFFLIMLNTLCLGI) traverse the membrane as a helical segment. Residues 1154 to 1168 (QHCNQSDHITKLSDT) are Extracellular-facing. The N-linked (GlcNAc...) asparagine glycan is linked to N1157. The helical transmembrane segment at 1169–1188 (LNLIFTVLFTGEMIVKLIAF) threads the bilayer. Residues 1189–1196 (KAKGYFGD) lie on the Cytoplasmic side of the membrane. Residues 1197–1215 (PWNVFDFIIVVGSIVDVVL) form a helical membrane-spanning segment. At 1216–1252 (SEVDAALEARGGLWCLHGCAEVNPMQAIAEAENVRVS) the chain is on the extracellular side. The helical transmembrane segment at 1253 to 1271 (ITFFRLFRVLRLIKLLNRS) threads the bilayer. Topologically, residues 1272 to 1290 (EGIRNLLWTFIKSFQALPH) are cytoplasmic. A helical membrane pass occupies residues 1291–1310 (VGLLIVMLFFIYAVIGMQMF). The Extracellular segment spans residues 1311–1377 (GKVALVDGTE…GEEYTCGSSI (67 aa)). The interval 1358–1424 (LCDAKSDYGP…LGPHHLDEFK (67 aa)) is dihydropyridine binding. Residues 1370-1413 (EYTCGSSIAVFYFLSFYILCAFLIINLFVAIIMDNVDYLTRDWS) are phenylalkylamine binding. A helical membrane pass occupies residues 1378–1402 (AVFYFLSFYILCAFLIINLFVAIIM). Over 1403-1852 (DNVDYLTRDW…TKPKENTSAV (450 aa)) the chain is Cytoplasmic. The EF-hand domain occupies 1418-1453 (HHLDEFKKIWAEYDPEATGRIKHLDVVTLLRRIQPP). Residues D1431, E1433, T1435, R1437, and D1442 each contribute to the Ca(2+) site. The tract at residues 1820 to 1852 (NRQSGKVTKRKRRPIPVPPGTKSTKPKENTSAV) is disordered.

It belongs to the calcium channel alpha-1 subunit (TC 1.A.1.11) family. As to quaternary structure, multisubunit complex consisting of alpha-1, alpha-2, beta and delta subunits in a 1:1:1:1 ratio. The channel activity is directed by the pore-forming and voltage-sensitive alpha-1 subunit. In many cases, this subunit is sufficient to generate voltage-sensitive calcium channel activity. The auxiliary subunits beta and alpha-2/delta linked by a disulfide bridge regulate the channel activity. An additional gamma subunit is present only in skeletal muscle L-type channel. In terms of processing, may be non-phosphorylated. In terms of tissue distribution, skeletal muscle.

The protein localises to the membrane. Its function is as follows. Voltage-sensitive calcium channels (VSCC) mediate the entry of calcium ions into excitable cells and are also involved in a variety of calcium-dependent processes, including muscle contraction, gene expression, cell motility, cell division and cell death. The isoform alpha-1S gives rise to L-type calcium currents. Long-lasting (L-type) calcium channels belong to the 'high-voltage activated' (HVA) group. They are blocked by dihydropyridines (DHP), phenylalkylamines, and by benzothiazepines. Calcium channels containing the alpha-1S subunit play an important role in excitation-contraction coupling in skeletal muscle. The polypeptide is Dihydropyridine-sensitive L-type skeletal muscle calcium channel subunit alpha-1 (Cyprinus carpio (Common carp)).